The following is a 663-amino-acid chain: Alcohol oxidase (663 aa).

8–39 (DVIVCGGGSTGCVIAGRLANVDENLKVLLIEN) contacts FAD. His567 functions as the Proton acceptor in the catalytic mechanism. The Microbody targeting signal motif lies at 661–663 (ARY).

Belongs to the GMC oxidoreductase family. Homooctamer. Requires FAD as cofactor.

The protein resides in the peroxisome matrix. It carries out the reaction a primary alcohol + O2 = an aldehyde + H2O2. It functions in the pathway energy metabolism; methane degradation. Catalyzes the oxidation of methanol to formaldehyde and hydrogen peroxide, the first step in the methanol utilization pathway of methylotrophic yeasts. The protein is Alcohol oxidase (AOD1) of Candida boidinii (Yeast).